The chain runs to 671 residues: DNA ligase (671 aa).

NAD(+)-binding positions include 32–36, 81–82, and Glu113; these read DAEYD and SL. The active-site N6-AMP-lysine intermediate is Lys115. NAD(+)-binding residues include Arg136, Glu173, Lys290, and Lys314. Zn(2+) is bound by residues Cys408, Cys411, Cys426, and Cys432. A BRCT domain is found at 593–671; that stretch reads EIDSPFAGKT…EAEMMRLLGE (79 aa).

The protein belongs to the NAD-dependent DNA ligase family. LigA subfamily. It depends on Mg(2+) as a cofactor. Requires Mn(2+) as cofactor.

It carries out the reaction NAD(+) + (deoxyribonucleotide)n-3'-hydroxyl + 5'-phospho-(deoxyribonucleotide)m = (deoxyribonucleotide)n+m + AMP + beta-nicotinamide D-nucleotide.. Its function is as follows. DNA ligase that catalyzes the formation of phosphodiester linkages between 5'-phosphoryl and 3'-hydroxyl groups in double-stranded DNA using NAD as a coenzyme and as the energy source for the reaction. It is essential for DNA replication and repair of damaged DNA. The chain is DNA ligase from Klebsiella pneumoniae (strain 342).